The chain runs to 409 residues: Nucleoprotein (409 aa).

Disordered stretches follow at residues 1-64 (MSAG…SNVK) and 167-197 (RNSSAVTSRENSRPGSRDSSRGRQRSRVDDD). An RNA-binding region spans residues 30–161 (GTGQASWFQS…NNYRWDFIAL (132 aa)). In terms of domain architecture, CoV N NTD spans 32–157 (GQASWFQSLK…GGPDNNYRWD (126 aa)). The span at 176–197 (ENSRPGSRDSSRGRQRSRVDDD) shows a compositional bias: basic and acidic residues. S192 carries the phosphoserine; by host modification. The 117-residue stretch at 217 to 333 (SKQKANEMAE…ECVDGVGTRP (117 aa)) folds into the CoV N CTD domain. A dimerization region spans residues 228-335 (KYHKRAIAPG…VDGVGTRPKD (108 aa)). A disulfide bridge links C322 with C325. Residues 327–409 (DGVGTRPKDD…GEGAFDDINI (83 aa)) form a disordered region. The span at 332–349 (RPKDDPTPRSRAASKDRN) shows a compositional bias: basic and acidic residues. T374 carries the phosphothreonine; by host modification.

It belongs to the gammacoronavirus nucleocapsid protein family. In terms of assembly, homooligomer. Both monomeric and oligomeric forms interact with RNA. Interacts with protein M. Interacts with NSP3; this interaction serves to tether the genome to the newly translated replicase-transcriptase complex at a very early stage of infection. ADP-ribosylated. The ADP-ribosylation is retained in the virion during infection. In terms of processing, phosphorylated on serine and threonine residues.

The protein localises to the virion. It localises to the host endoplasmic reticulum-Golgi intermediate compartment. It is found in the host Golgi apparatus. Packages the positive strand viral genome RNA into a helical ribonucleocapsid (RNP) and plays a fundamental role during virion assembly through its interactions with the viral genome and membrane protein M. Plays an important role in enhancing the efficiency of subgenomic viral RNA transcription as well as viral replication. The polypeptide is Nucleoprotein (Gallus gallus (Chicken)).